The primary structure comprises 384 residues: GTPase Obg (384 aa).

Residues 1-159 (MKFVDEVEIR…RPLKLELMLL (159 aa)) enclose the Obg domain. The tract at residues 72 to 94 (NGMGKNCTGRRGNDIVLPVPPGT) is disordered. One can recognise an OBG-type G domain in the interval 160-333 (ADVGLLGMPN…LCREVMSYLE (174 aa)). GTP is bound by residues 166–173 (GMPNAGKS), 191–195 (FTTLI), 213–216 (DIPG), 283–286 (NKVD), and 314–316 (AAL). Mg(2+) is bound by residues serine 173 and threonine 193. A disordered region spans residues 358–384 (EEVLEEEMDDEDDDDDDDHDVEVIYQK). The span at 360–377 (VLEEEMDDEDDDDDDDHD) shows a compositional bias: acidic residues.

It belongs to the TRAFAC class OBG-HflX-like GTPase superfamily. OBG GTPase family. In terms of assembly, monomer. Mg(2+) is required as a cofactor.

Its subcellular location is the cytoplasm. An essential GTPase which binds GTP, GDP and possibly (p)ppGpp with moderate affinity, with high nucleotide exchange rates and a fairly low GTP hydrolysis rate. Plays a role in control of the cell cycle, stress response, ribosome biogenesis and in those bacteria that undergo differentiation, in morphogenesis control. This Idiomarina loihiensis (strain ATCC BAA-735 / DSM 15497 / L2-TR) protein is GTPase Obg.